The sequence spans 252 residues: Flagellar L-ring protein (252 aa).

The first 25 residues, 1 to 25 (MLKLASLNRIVLTGTLLAAAGLASG), serve as a signal peptide directing secretion. Cys26 carries the N-palmitoyl cysteine lipid modification. Residue Cys26 is the site of S-diacylglycerol cysteine attachment.

It belongs to the FlgH family. In terms of assembly, the basal body constitutes a major portion of the flagellar organelle and consists of four rings (L,P,S, and M) mounted on a central rod.

Its subcellular location is the cell outer membrane. It localises to the bacterial flagellum basal body. In terms of biological role, assembles around the rod to form the L-ring and probably protects the motor/basal body from shearing forces during rotation. The sequence is that of Flagellar L-ring protein from Nitrobacter winogradskyi (strain ATCC 25391 / DSM 10237 / CIP 104748 / NCIMB 11846 / Nb-255).